The chain runs to 175 residues: Large ribosomal subunit protein uL10 (175 aa).

The protein belongs to the universal ribosomal protein uL10 family. Part of the ribosomal stalk of the 50S ribosomal subunit. The N-terminus interacts with L11 and the large rRNA to form the base of the stalk. The C-terminus forms an elongated spine to which L12 dimers bind in a sequential fashion forming a multimeric L10(L12)X complex.

Forms part of the ribosomal stalk, playing a central role in the interaction of the ribosome with GTP-bound translation factors. The polypeptide is Large ribosomal subunit protein uL10 (Synechococcus sp. (strain CC9605)).